A 1199-amino-acid polypeptide reads, in one-letter code: Tubulin monoglutamylase TTLL4 (1199 aa).

Residues 1 to 25 (MASAGTQHYSIGLRQKNSFKQSGPS) show a composition bias toward polar residues. 3 disordered regions span residues 1–43 (MASA…RVWP), 472–517 (IQLG…ELVD), and 525–544 (RDENEEEEGDSECSSLSAVS). Residues 477–495 (SEKERPEEARELDSSDRDI) show a composition bias toward basic and acidic residues. The span at 506–517 (AETEDTEEELVD) shows a compositional bias: acidic residues. One can recognise a TTL domain in the interval 604–947 (RKLLRWKMST…VLPNAEDIIS (344 aa)). Ser691 is modified (phosphoserine). Residues Lys721, 727–728 (RG), 749–752 (QRYL), and 762–764 (KFD) each bind ATP. Arg727 provides a ligand contact to a protein. Arg788 is an L-glutamate binding site. 809 to 810 (TN) contacts ATP. The L-glutamate site is built by Tyr811, Ser812, and Lys833. Mg(2+) is bound by residues Asp893, Glu906, and Asn908. Residues 918–1029 (PLDISIKGQM…RGQFERIFPS (112 aa)) form a c-MTBD region region. An L-glutamate-binding site is contributed by Lys924. A compositionally biased stretch (polar residues) spans 1130–1141 (GTTPKSKKTQAG). Positions 1130–1199 (GTTPKSKKTQ…ISDSLLAVSP (70 aa)) are disordered. Residues 1151-1160 (SSKDSEDTSK) are compositionally biased toward basic and acidic residues. The segment covering 1164-1192 (LSTQTLPVIKCSGQTSRLSASSTFQSISD) has biased composition (polar residues).

This sequence belongs to the tubulin--tyrosine ligase family. The cofactor is Mg(2+).

Its subcellular location is the cytoplasm. It localises to the cell projection. The protein localises to the cilium. It is found in the cytoskeleton. The protein resides in the cilium basal body. The enzyme catalyses L-glutamyl-[protein] + L-glutamate + ATP = gamma-L-glutamyl-L-glutamyl-[protein] + ADP + phosphate + H(+). Its function is as follows. Monoglutamylase which modifies both tubulin and non-tubulin proteins, adding a single glutamate on the gamma-carboxyl group of specific glutamate residues of target proteins. Involved in the side-chain initiation step of the polyglutamylation reaction but not in the elongation step. Preferentially modifies beta-tail tubulin over the alpha-tubulin. Monoglutamylates nucleosome assembly proteins NAP1L1 and NAP1L4. Monoglutamylates nucleotidyltransferase CGAS, leading to inhibition of CGAS catalytic activity, thereby preventing antiviral defense function. Involved in KLF4 glutamylation which impedes its ubiquitination, thereby leading to somatic cell reprogramming, pluripotency maintenance and embryogenesis. This chain is Tubulin monoglutamylase TTLL4, found in Homo sapiens (Human).